The primary structure comprises 248 residues: Something about silencing protein 5 (248 aa).

The region spanning 1–139 is the YEATS domain; that stretch reads MDHSIEVTFR…SELSKYFDLP (139 aa). Residue Ser144 is modified to Phosphoserine. The disordered stretch occupies residues 223-248; the sequence is TKQERTNFGSDAIHKDEPVKAHNKLK.

In terms of assembly, component of the SAS complex, at least composed of SAS2, SAS4 and SAS5. These three proteins constitute the core of the complex, and are sufficient to acetylate histones.

Its subcellular location is the nucleus. Component of the SAS complex, a multiprotein complex that acetylates 'Lys-16' of histone H4 and 'Lys-14' of histone H3. The SAS complex is however unable to acetylate nucleosomal histones. The complex is involved in transcriptional silencing at telomeres and at HML locus. Also involved in rDNA silencing. In the complex, SAS5 is required for maximal histone acetyltransferase (HAT) activity of the complex, suggesting that it may be required to stabilize the complex or help in substrate recognition. This chain is Something about silencing protein 5 (SAS5), found in Saccharomyces cerevisiae (strain ATCC 204508 / S288c) (Baker's yeast).